The sequence spans 109 residues: Phosphoribosyl-ATP pyrophosphatase (109 aa).

It belongs to the PRA-PH family.

It localises to the cytoplasm. It catalyses the reaction 1-(5-phospho-beta-D-ribosyl)-ATP + H2O = 1-(5-phospho-beta-D-ribosyl)-5'-AMP + diphosphate + H(+). It functions in the pathway amino-acid biosynthesis; L-histidine biosynthesis; L-histidine from 5-phospho-alpha-D-ribose 1-diphosphate: step 2/9. The protein is Phosphoribosyl-ATP pyrophosphatase of Alkalilimnicola ehrlichii (strain ATCC BAA-1101 / DSM 17681 / MLHE-1).